A 393-amino-acid chain; its full sequence is Bone morphogenetic protein 2 (393 aa).

The N-terminal stretch at Met-1–Gly-19 is a signal peptide. Residues Gly-20–Arg-279 constitute a propeptide, cleaved by PCSK5. Ser-85 is modified (phosphoserine). N-linked (GlcNAc...) asparagine glycosylation is found at Asn-133, Asn-161, and Asn-197. The tract at residues Gly-268–Lys-290 is disordered. Over residues His-271–Lys-290 the composition is skewed to basic residues. 3 cysteine pairs are disulfide-bonded: Cys-293–Cys-358, Cys-322–Cys-390, and Cys-326–Cys-392. An N-linked (GlcNAc...) asparagine glycan is attached at Asn-335.

It belongs to the TGF-beta family. Homodimer; disulfide-linked. Interacts with SOSTDC1. Interacts with GREM2, RGMA, RGMB and RGMC. Interacts with ASPN. Interacts with MAFP5. Interacts with FBN1 (via N-terminal domain) and FBN2. Interacts with type I receptor BMPR1A. Interacts with type II receptor BMPR2. Interacts with SCUBE3. Interacts with TNFAIP6 (primarily via Link domain); this interaction is inhibited by hyaluronan. Interacts with ERFE. Interacts with BMPR1A/ALK3; the interaction may induce HAMP expression. Forms heterodimers with BMP6 in vitro; the heterodimer then binds to its receptor BMPR1A /ALK3 and may induce HAMP expression. Interacts with TGFBR3. As to expression, expressed in femur, calvaria, trachea, lung and ovary.

The protein localises to the secreted. Its function is as follows. Growth factor of the TGF-beta superfamily that plays essential roles in many developmental processes, including cardiogenesis, neurogenesis, and osteogenesis. Induces cartilage and bone formation. Initiates the canonical BMP signaling cascade by associating with type I receptor BMPR1A and type II receptor BMPR2. Once all three components are bound together in a complex at the cell surface, BMPR2 phosphorylates and activates BMPR1A. In turn, BMPR1A propagates signal by phosphorylating SMAD1/5/8 that travel to the nucleus and act as activators and repressors of transcription of target genes. Also acts to promote expression of HAMP, via the interaction with its receptor BMPR1A/ALK3. Can also signal through non-canonical pathways such as ERK/MAP kinase signaling cascade that regulates osteoblast differentiation. Also stimulates the differentiation of myoblasts into osteoblasts via the EIF2AK3-EIF2A-ATF4 pathway by stimulating EIF2A phosphorylation which leads to increased expression of ATF4 which plays a central role in osteoblast differentiation. Acts as a positive regulator of odontoblast differentiation during mesenchymal tooth germ formation, expression is repressed during the bell stage by MSX1-mediated inhibition of CTNNB1 signaling. The protein is Bone morphogenetic protein 2 (Bmp2) of Rattus norvegicus (Rat).